The following is a 148-amino-acid chain: Deoxyuridine 5'-triphosphate nucleotidohydrolase (148 aa).

Substrate contacts are provided by residues 67–69 (RSG), N80, 84–86 (LID), and M94.

It belongs to the dUTPase family. It depends on Mg(2+) as a cofactor.

It carries out the reaction dUTP + H2O = dUMP + diphosphate + H(+). Its pathway is pyrimidine metabolism; dUMP biosynthesis; dUMP from dCTP (dUTP route): step 2/2. This enzyme is involved in nucleotide metabolism: it produces dUMP, the immediate precursor of thymidine nucleotides and it decreases the intracellular concentration of dUTP so that uracil cannot be incorporated into DNA. In Francisella tularensis subsp. tularensis (strain FSC 198), this protein is Deoxyuridine 5'-triphosphate nucleotidohydrolase.